Consider the following 670-residue polypeptide: ATP-dependent DNA helicase Rep (670 aa).

Residues 1–277 (MLFNEHQKKA…IIMQHNYRSS (277 aa)) form the UvrD-like helicase ATP-binding domain. ATP-binding positions include 22-29 (AGAGSGKT) and Arg-275. Residues 278-562 (GRILKVANAL…QLMTLHASKG (285 aa)) form the UvrD-like helicase C-terminal domain.

This sequence belongs to the helicase family. UvrD subfamily. In terms of assembly, homodimer.

The enzyme catalyses Couples ATP hydrolysis with the unwinding of duplex DNA by translocating in the 3'-5' direction.. The catalysed reaction is ATP + H2O = ADP + phosphate + H(+). Rep helicase is a single-stranded DNA-dependent ATPase involved in DNA replication; it can initiate unwinding at a nick in the DNA. It binds to the single-stranded DNA and acts in a progressive fashion along the DNA in the 3' to 5' direction. The polypeptide is ATP-dependent DNA helicase Rep (Buchnera aphidicola subsp. Baizongia pistaciae (strain Bp)).